The primary structure comprises 388 residues: Succinate--CoA ligase [ADP-forming] subunit beta (388 aa).

Positions 9–244 constitute an ATP-grasp domain; the sequence is KQLFARYGLP…QSQEDPREAQ (236 aa). ATP-binding positions include lysine 46, 53 to 55, glutamate 99, threonine 102, and glutamate 107; that span reads GRG. 2 residues coordinate Mg(2+): asparagine 199 and aspartate 213. Substrate is bound by residues asparagine 264 and 321–323; that span reads GIV.

Belongs to the succinate/malate CoA ligase beta subunit family. As to quaternary structure, heterotetramer of two alpha and two beta subunits. Mg(2+) is required as a cofactor.

It carries out the reaction succinate + ATP + CoA = succinyl-CoA + ADP + phosphate. The enzyme catalyses GTP + succinate + CoA = succinyl-CoA + GDP + phosphate. It participates in carbohydrate metabolism; tricarboxylic acid cycle; succinate from succinyl-CoA (ligase route): step 1/1. Succinyl-CoA synthetase functions in the citric acid cycle (TCA), coupling the hydrolysis of succinyl-CoA to the synthesis of either ATP or GTP and thus represents the only step of substrate-level phosphorylation in the TCA. The beta subunit provides nucleotide specificity of the enzyme and binds the substrate succinate, while the binding sites for coenzyme A and phosphate are found in the alpha subunit. This chain is Succinate--CoA ligase [ADP-forming] subunit beta, found in Shigella boydii serotype 18 (strain CDC 3083-94 / BS512).